The chain runs to 401 residues: Dynactin subunit 2 (401 aa).

A disordered region spans residues 1 to 25 (MADPKYADLPGIARNEPDVYETSDL). The residue at position 2 (Ala-2) is an N-acetylalanine. Tyr-6 carries the phosphotyrosine modification. Ser-83 is subject to Phosphoserine. At Tyr-86 the chain carries Phosphotyrosine. Residues 99-132 (PQQKYQRLLHEVQELTTEVEKIKTTVKESATEEK) adopt a coiled-coil conformation. Thr-134 and Thr-198 each carry phosphothreonine. The stretch at 214–244 (EQDKFSQAAKVAELEKRLTELETAVRCDQDA) forms a coiled coil. The residue at position 320 (Ser-320) is a Phosphoserine. A coiled-coil region spans residues 379–399 (RENLATVEGNFASIDERMKKL).

It belongs to the dynactin subunit 2 family. Subunit of dynactin, a multiprotein complex part of a tripartite complex with dynein and a adapter, such as BICDL1, BICD2 or HOOK3. The dynactin complex is built around ACTR1A/ACTB filament and consists of an actin-related filament composed of a shoulder domain, a pointed end and a barbed end. Its length is defined by its flexible shoulder domain. The soulder is composed of 2 DCTN1 subunits, 4 DCTN2 and 2 DCTN3. The 4 DCNT2 (via N-terminus) bind the ACTR1A filament and act as molecular rulers to determine the length. The pointed end is important for binding dynein-dynactin cargo adapters and consists of 4 subunits: ACTR10, DCNT4, DCTN5 and DCTN6. The barbed end is composed of a CAPZA1:CAPZB heterodimers, which binds ACTR1A/ACTB filament and dynactin and stabilizes dynactin. Interacts with BICD2 and CEP135. Interacts with DYNAP. Interacts with ECPAS. Interacts with MAPRE1.

The protein resides in the cytoplasm. It localises to the cytoskeleton. The protein localises to the microtubule organizing center. It is found in the centrosome. Its subcellular location is the membrane. Its function is as follows. Part of the dynactin complex that activates the molecular motor dynein for ultra-processive transport along microtubules. In the dynactin soulder domain, binds the ACTR1A filament and acts as a molecular ruler to determine the length. Modulates cytoplasmic dynein binding to an organelle, and plays a role in prometaphase chromosome alignment and spindle organization during mitosis. Involved in anchoring microtubules to centrosomes. May play a role in synapse formation during brain development. This Homo sapiens (Human) protein is Dynactin subunit 2.